Consider the following 217-residue polypeptide: Ribonuclease HII (217 aa).

Positions 27–216 constitute an RNase H type-2 domain; that stretch reads RTIAGIDEAG…VREHLGESRC (190 aa). Residues D33, E34, and D125 each coordinate a divalent metal cation.

It belongs to the RNase HII family. Mn(2+) serves as cofactor. Requires Mg(2+) as cofactor.

It localises to the cytoplasm. The enzyme catalyses Endonucleolytic cleavage to 5'-phosphomonoester.. Endonuclease that specifically degrades the RNA of RNA-DNA hybrids. This chain is Ribonuclease HII, found in Geobacter sulfurreducens (strain ATCC 51573 / DSM 12127 / PCA).